Reading from the N-terminus, the 302-residue chain is MDQQRLTHLKQLEAESIHIIREVAAEFDNPVMMYSIGKDSSVMLHLTRKAFYPGKIPFPLLHVDTDWKFRDMITFRDATAKKYGFDLIVHKNPEGLAAGINPFDHGSSKHTDIMKTQGLKQALNKYGFDAAFGGARRDEEKSRAKERVYSFRDKNHTWDPKNQRPELWRTYNGQINKGESIRVFPLSNWTELDIWQYIYLENIEIVPLYLADVRPVVQRDGMLIMVDDDRMKLREGEQIEHKSVRFRTLGCYPLTGAIESQANTLTEIIEEMLVATSSERQGRAIDHDQSGSMELKKRQGYF.

Residues 280-302 (RQGRAIDHDQSGSMELKKRQGYF) are disordered.

Belongs to the PAPS reductase family. CysD subfamily. Heterodimer composed of CysD, the smaller subunit, and CysN.

The catalysed reaction is sulfate + ATP + H(+) = adenosine 5'-phosphosulfate + diphosphate. Its pathway is sulfur metabolism; hydrogen sulfide biosynthesis; sulfite from sulfate: step 1/3. With CysN forms the ATP sulfurylase (ATPS) that catalyzes the adenylation of sulfate producing adenosine 5'-phosphosulfate (APS) and diphosphate, the first enzymatic step in sulfur assimilation pathway. APS synthesis involves the formation of a high-energy phosphoric-sulfuric acid anhydride bond driven by GTP hydrolysis by CysN coupled to ATP hydrolysis by CysD. This is Sulfate adenylyltransferase subunit 2 from Vibrio cholerae serotype O1 (strain ATCC 39541 / Classical Ogawa 395 / O395).